We begin with the raw amino-acid sequence, 122 residues long: uncharacterized protein (122 aa).

An N-terminal signal peptide occupies residues 1–35 (MCCYVGKATKIFLCLAAALIVVGLVLGFGLAHRTW). A disordered region spans residues 55–83 (YGGGGGGGDPLPATSGAGDTPPGVPLTEP).

This is an uncharacterized protein from Oryza sativa subsp. japonica (Rice).